Reading from the N-terminus, the 238-residue chain is Phosphoribosylaminoimidazole-succinocarboxamide synthase (238 aa).

The protein belongs to the SAICAR synthetase family.

The catalysed reaction is 5-amino-1-(5-phospho-D-ribosyl)imidazole-4-carboxylate + L-aspartate + ATP = (2S)-2-[5-amino-1-(5-phospho-beta-D-ribosyl)imidazole-4-carboxamido]succinate + ADP + phosphate + 2 H(+). It functions in the pathway purine metabolism; IMP biosynthesis via de novo pathway; 5-amino-1-(5-phospho-D-ribosyl)imidazole-4-carboxamide from 5-amino-1-(5-phospho-D-ribosyl)imidazole-4-carboxylate: step 1/2. This Nitrosococcus oceani (strain ATCC 19707 / BCRC 17464 / JCM 30415 / NCIMB 11848 / C-107) protein is Phosphoribosylaminoimidazole-succinocarboxamide synthase.